The following is a 445-amino-acid chain: Tubulin beta chain (445 aa).

Residues Q11, E69, S138, G142, T143, G144, N204, and N226 each coordinate GTP. A Mg(2+)-binding site is contributed by E69. The tract at residues 426 to 445 (QDATAEEEGEFEEEEGDVEA) is disordered. Positions 429–445 (TAEEEGEFEEEEGDVEA) are enriched in acidic residues.

The protein belongs to the tubulin family. As to quaternary structure, dimer of alpha and beta chains. A typical microtubule is a hollow water-filled tube with an outer diameter of 25 nm and an inner diameter of 15 nM. Alpha-beta heterodimers associate head-to-tail to form protofilaments running lengthwise along the microtubule wall with the beta-tubulin subunit facing the microtubule plus end conferring a structural polarity. Microtubules usually have 13 protofilaments but different protofilament numbers can be found in some organisms and specialized cells. Interacts with DCX/apicortin; the interaction stabilizes microtubule assembly. Requires Mg(2+) as cofactor.

It localises to the cytoplasm. Its subcellular location is the cytoskeleton. Tubulin is the major constituent of microtubules, a cylinder consisting of laterally associated linear protofilaments composed of alpha- and beta-tubulin heterodimers. Microtubules grow by the addition of GTP-tubulin dimers to the microtubule end, where a stabilizing cap forms. Below the cap, tubulin dimers are in GDP-bound state, owing to GTPase activity of alpha-tubulin. The chain is Tubulin beta chain from Plasmodium falciparum (isolate 3D7).